The chain runs to 424 residues: Cuticlin-1 (424 aa).

Positions 1–18 are cleaved as a signal peptide; it reads MTWKPIICLAALVLSASA. The Extracellular portion of the chain corresponds to 19 to 392; the sequence is IPVDNNVEGE…ATSTGICLTP (374 aa). One can recognise a ZP domain in the interval 32-277; that stretch reads ECGPNSITVN…PTCSEPQGFG (246 aa). A disulfide bond links Cys197 and Cys252. Repeat copies occupy residues 302-305, 307-311, 312-315, and 320-323. The 4 X 4 AA repeats of A-A-P-[AVI] stretch occupies residues 302-323; that stretch reads AAPVAAAAPVAAPVAAAAAAPA. The chain crosses the membrane as a helical span at residues 393–413; sequence IGFASFLGIGTIVATALSATI. The Cytoplasmic segment spans residues 414-424; that stretch reads FYVARPTSHKH.

The protein localises to the cell membrane. The protein resides in the secreted. Functionally, component of the cuticles, which contributes to the formation of extracellular envelopes protecting the organism from the environment. Plays a role in alae formation in dauer larvae. The polypeptide is Cuticlin-1 (Caenorhabditis elegans).